Reading from the N-terminus, the 242-residue chain is Platinum sensitivity protein 3 (242 aa).

As to quaternary structure, component of the SHU complex composed of at least CSM2, PSY3, SHU1 and SHU2.

The protein resides in the nucleus. In terms of biological role, required for resistance to the DNA-damaging agents methyl methanesulfonate (MMS), cisplatin and oxaliplatin, but not to mitomycin C. Plays a role in protection against mutation accumulation. May be a component of the recombination-repair pathway. The sequence is that of Platinum sensitivity protein 3 (PSY3) from Saccharomyces cerevisiae (strain ATCC 204508 / S288c) (Baker's yeast).